A 428-amino-acid polypeptide reads, in one-letter code: MFVDQVQVEVQAGKGGDGMVAFRREKFVPFGGPAGGDGGHGGSIILYVDEGLRTLMDFRYQRHFKASAGGNGQGKQMYGRAAEDRRIAVPAGTTVTDADTGEVLGDLTEPGQTLVVAKGGRGGRGNMHFVSPKNTAPEISENGEPGEHRFIKLELKVLADVGLVGFPSVGKSTLLSVVTQAKPKIAAYQFTTLVPNLGMVQLDDGTDFVMADLPGLIEGASQGVGLGIQFLRHVERTRVLLHLVEMDPDNGREPLDDYDQIRKELGAYDDNILKRPELVVATKMDLPGAAERFADFKAALLARGVAADHIFEISSLTHRGVTPLMHKTAEVLKTAPHFEPEQAAVKTADYKYQPEPALKVTRDSDGTFVLTGDKIERAFKMANLDHEDGAMRFARQLRSMGVDDALRDAGAESGDLVAIDDFTFEFVE.

The Obg domain occupies 1–158 (MFVDQVQVEV…RFIKLELKVL (158 aa)). Positions 159 to 333 (ADVGLVGFPS…LMHKTAEVLK (175 aa)) constitute an OBG-type G domain. GTP-binding positions include 165 to 172 (GFPSVGKS), 190 to 194 (FTTLV), 212 to 215 (DLPG), 282 to 285 (TKMD), and 314 to 316 (SSL). Mg(2+) is bound by residues Ser172 and Thr192. The OCT domain maps to 350-428 (YKYQPEPALK…IDDFTFEFVE (79 aa)).

It belongs to the TRAFAC class OBG-HflX-like GTPase superfamily. OBG GTPase family. As to quaternary structure, monomer. Requires Mg(2+) as cofactor.

Its subcellular location is the cytoplasm. Functionally, an essential GTPase which binds GTP, GDP and possibly (p)ppGpp with moderate affinity, with high nucleotide exchange rates and a fairly low GTP hydrolysis rate. Plays a role in control of the cell cycle, stress response, ribosome biogenesis and in those bacteria that undergo differentiation, in morphogenesis control. This Lacticaseibacillus casei (strain BL23) (Lactobacillus casei) protein is GTPase Obg.